We begin with the raw amino-acid sequence, 370 residues long: Spermidine/putrescine import ATP-binding protein PotA (370 aa).

One can recognise an ABC transporter domain in the interval 6-236 (IELHQVTKRY…PINHFVADFI (231 aa)). 38–45 (GPSGCGKT) is a binding site for ATP.

This sequence belongs to the ABC transporter superfamily. Spermidine/putrescine importer (TC 3.A.1.11.1) family. In terms of assembly, the complex is composed of two ATP-binding proteins (PotA), two transmembrane proteins (PotB and PotC) and a solute-binding protein (PotD).

The protein resides in the cell membrane. It carries out the reaction ATP + H2O + polyamine-[polyamine-binding protein]Side 1 = ADP + phosphate + polyamineSide 2 + [polyamine-binding protein]Side 1.. Functionally, part of the ABC transporter complex PotABCD involved in spermidine/putrescine import. Responsible for energy coupling to the transport system. In Levilactobacillus brevis (strain ATCC 367 / BCRC 12310 / CIP 105137 / JCM 1170 / LMG 11437 / NCIMB 947 / NCTC 947) (Lactobacillus brevis), this protein is Spermidine/putrescine import ATP-binding protein PotA.